The sequence spans 288 residues: Mortality factor 4-like protein 2 (288 aa).

Positions 1-15 (MSSRKQASQTRGQQS) are enriched in polar residues. The tract at residues 1–115 (MSSRKQASQT…DPTVESEEAF (115 aa)) is disordered. The residue at position 71 (Ser71) is a Phosphoserine. The 172-residue stretch at 117 to 288 (SRMEVKVKIP…ASADYHRKAL (172 aa)) folds into the MRG domain.

As to quaternary structure, component of the NuA4 histone acetyltransferase complex which contains the catalytic subunit KAT5/TIP60 and the subunits EP400, TRRAP/PAF400, BRD8/SMAP, EPC1, DMAP1/DNMAP1, RUVBL1/TIP49, RUVBL2, ING3, actin, ACTL6A/BAF53A, MORF4L1/MRG15, MORF4L2/MRGX, MRGBP, YEATS4/GAS41 and VPS72/YL1. The NuA4 complex interacts with MYC and the adenovirus E1A protein. MORF4L1 may also participate in the formation of NuA4 related complexes which lack the KAT5/TIP60 catalytic subunit, but which include the SWI/SNF related protein SRCAP. Component of the MSIN3A histone deacetylase complex, which includes SIN3A, HDAC2, ARID4B, MORF4L1, RBBP4/RbAp48, and RBBP7/RbAp46. Interacts with MRFAP1 and RB1. May also interact with one or more as yet undefined members of the TLE (transducin-like enhancer of split) family of transcriptional repressors.

The protein localises to the nucleus. Functionally, component of the NuA4 histone acetyltransferase complex which is involved in transcriptional activation of select genes principally by acetylation of nucleosomal histone H4 and H2A. This modification may both alter nucleosome - DNA interactions and promote interaction of the modified histones with other proteins which positively regulate transcription. This complex may be required for the activation of transcriptional programs associated with oncogene and proto-oncogene mediated growth induction, tumor suppressor mediated growth arrest and replicative senescence, apoptosis, and DNA repair. The NuA4 complex ATPase and helicase activities seem to be, at least in part, contributed by the association of RUVBL1 and RUVBL2 with EP400. NuA4 may also play a direct role in DNA repair when directly recruited to sites of DNA damage. Also a component of the MSIN3A complex which acts to repress transcription by deacetylation of nucleosomal histones. The protein is Mortality factor 4-like protein 2 (Morf4l2) of Mus musculus (Mouse).